A 234-amino-acid chain; its full sequence is MNQASDEKALVVLSGGQDSTTCLYWALRRFGAGKVEAVTFDYGQRHRVELDCARKIAALAGVRQTVLPIDTFAAIGGNALTDASIAPEEGVRDDDALPNTFVPGRNLVFLTFAAAFAYTRGARHLVTGVAQTDYSGYPDCRENTLKALEVALRLGMDSRVELHTPLMYLSKAETVTLAQQVGALEALAWSHTCYNGEVPPCGHCASCELRAKGFAEAGVPDPLVERCQAEAQGL.

13-23 contacts ATP; it reads LSGGQDSTTCL. Zn(2+) contacts are provided by Cys-193, Cys-201, Cys-204, and Cys-207.

The protein belongs to the QueC family. It depends on Zn(2+) as a cofactor.

It carries out the reaction 7-carboxy-7-deazaguanine + NH4(+) + ATP = 7-cyano-7-deazaguanine + ADP + phosphate + H2O + H(+). Its pathway is purine metabolism; 7-cyano-7-deazaguanine biosynthesis. Its function is as follows. Catalyzes the ATP-dependent conversion of 7-carboxy-7-deazaguanine (CDG) to 7-cyano-7-deazaguanine (preQ(0)). In Chromobacterium violaceum (strain ATCC 12472 / DSM 30191 / JCM 1249 / CCUG 213 / NBRC 12614 / NCIMB 9131 / NCTC 9757 / MK), this protein is 7-cyano-7-deazaguanine synthase.